The sequence spans 176 residues: MDAVILMATEEVGHFGLNTNLLETNVINLAIIIGVLVYFGRGLLGKTLGDRQQQIATAIAEAEERQRTAAARLAQEQQKLAQAKEEAARIREAALVRAKAAKEELIAKAQQEIERLKQTASQDTSAATERAIAEIRERITALALAQAEQQLKERLSHDAELQRTLVDRSIALLGGK.

The helical transmembrane segment at 26-45 (VINLAIIIGVLVYFGRGLLG) threads the bilayer.

This sequence belongs to the ATPase B chain family. In terms of assembly, F-type ATPases have 2 components, F(1) - the catalytic core - and F(0) - the membrane proton channel. F(1) has five subunits: alpha(3), beta(3), gamma(1), delta(1), epsilon(1). F(0) has four main subunits: a(1), b(1), b'(1) and c(10-14). The alpha and beta chains form an alternating ring which encloses part of the gamma chain. F(1) is attached to F(0) by a central stalk formed by the gamma and epsilon chains, while a peripheral stalk is formed by the delta, b and b' chains.

It localises to the cellular thylakoid membrane. F(1)F(0) ATP synthase produces ATP from ADP in the presence of a proton or sodium gradient. F-type ATPases consist of two structural domains, F(1) containing the extramembraneous catalytic core and F(0) containing the membrane proton channel, linked together by a central stalk and a peripheral stalk. During catalysis, ATP synthesis in the catalytic domain of F(1) is coupled via a rotary mechanism of the central stalk subunits to proton translocation. In terms of biological role, component of the F(0) channel, it forms part of the peripheral stalk, linking F(1) to F(0). The polypeptide is ATP synthase subunit b (Synechococcus sp. (strain PCC 6716)).